The sequence spans 499 residues: Cysteine--tRNA ligase (499 aa).

Residue Cys30 coordinates Zn(2+). Residues 32 to 42 (PTVYDRAHLGN) carry the 'HIGH' region motif. Cys221, His246, and Glu250 together coordinate Zn(2+). Residues 279–283 (KMSKS) carry the 'KMSKS' region motif. An ATP-binding site is contributed by Lys282.

It belongs to the class-I aminoacyl-tRNA synthetase family. In terms of assembly, monomer. Requires Zn(2+) as cofactor.

It is found in the cytoplasm. The catalysed reaction is tRNA(Cys) + L-cysteine + ATP = L-cysteinyl-tRNA(Cys) + AMP + diphosphate. This is Cysteine--tRNA ligase from Cereibacter sphaeroides (strain ATCC 17023 / DSM 158 / JCM 6121 / CCUG 31486 / LMG 2827 / NBRC 12203 / NCIMB 8253 / ATH 2.4.1.) (Rhodobacter sphaeroides).